The primary structure comprises 535 residues: MGLMPDFLSLCHEFPWTFLLVVIFSFMIFKVTKTHLVNKSKKYKLPPGPKPWPIVGNLPEMLANRPATIWIHKLMKEMNTEIACIRLANTIVIPVTCPTIACEFLKKHDASFASRPKIMSTDIASDGFITTVLVPYGEQWKKMKRVLVNNLLSPQKHQWLLGKRNEEADNLMFYIYNKCCKDVNDGPGLVNIRIAAQHYGGNVFRKLIFNSRYFGKVMEDGGPGFEEVEHINATFTILKYVYAFSISDFVPFLRRLDLDGHRSKIMKAMRIMRKYHDPIIDDRIKQWNDGLKTVEEDLLDVLIKLKDANNKPLLTLKELKAQIIELAIEMVDNPSNAFEWALAEMINQPELLKRATEELDNVVGKERLVQESDIPKLQFVKACAREALRLHPMEYFNVPHLCMNDTMVGDYLFPKGTQVLLSRVALGRNPKFWTDPLKFNPERHLKEGIDVVLTEPDLRFISFTTGRRSCPGVALGTTMTVMLFARMLHGFSWSPPPDVSSIDLVPSKDDLFLAKPLLLVAKPRLAAELYRTNEI.

The Cytoplasmic segment spans residues 1 to 8 (MGLMPDFL). Residues 9–29 (SLCHEFPWTFLLVVIFSFMIF) form a helical; Signal-anchor for type II membrane protein membrane-spanning segment. Residues 30 to 535 (KVTKTHLVNK…AAELYRTNEI (506 aa)) lie on the Lumenal side of the membrane. Asparagine 38, asparagine 232, and asparagine 404 each carry an N-linked (GlcNAc...) asparagine glycan. Position 470 (cysteine 470) interacts with heme.

Belongs to the cytochrome P450 family. It depends on heme as a cofactor. Exclusively expressed in aerial parts. Highest expression in the apical leaves. Also detected in the second leaf from the top and in the stem. Not expressed in older leaves or roots.

It is found in the microsome membrane. It carries out the reaction L-isoleucine + 2 reduced [NADPH--hemoprotein reductase] + 2 O2 = (1E,2S)-2-methylbutanal oxime + 2 oxidized [NADPH--hemoprotein reductase] + CO2 + 3 H2O + 2 H(+). The enzyme catalyses L-isoleucine + reduced [NADPH--hemoprotein reductase] + O2 = N-hydroxy-L-isoleucine + oxidized [NADPH--hemoprotein reductase] + H2O + 2 H(+). It catalyses the reaction N-hydroxy-L-isoleucine + reduced [NADPH--hemoprotein reductase] + O2 = N,N-dihydroxy-L-isoleucine + oxidized [NADPH--hemoprotein reductase] + H2O + H(+). The catalysed reaction is L-valine + 2 reduced [NADPH--hemoprotein reductase] + 2 O2 = (E)-2-methylpropanal oxime + 2 oxidized [NADPH--hemoprotein reductase] + CO2 + 3 H2O + 2 H(+). It carries out the reaction L-valine + reduced [NADPH--hemoprotein reductase] + O2 = N-hydroxy-L-valine + oxidized [NADPH--hemoprotein reductase] + H2O + 2 H(+). The enzyme catalyses N-hydroxy-L-valine + reduced [NADPH--hemoprotein reductase] + O2 = N,N-dihydroxy-L-valine + oxidized [NADPH--hemoprotein reductase] + H2O + H(+). Its pathway is secondary metabolite biosynthesis. Functionally, involved in the biosynthesis of the cyanogenic glucosides linamarin and lotaustralin and of the nitirle glucosides rhodiocyanoside A and D. Can use L-isoleucine &gt; L-valine as substrate, but not L-leucine, L-phenylalanine or L-tyrosine. Catalyzes multi-step reactions starting with two successive N-hydroxylations using L-isoleucine and, to a lower extent, L-valine as substrates leading to the formation of N,N-dihydroxy-L-valine and N,N-dihydroxy-L-isoleucine, respectively; following spontaneous reactions lead to the production of (E)-2-methylpropanal oxime and (1E,2S)-2-methylbutanal oxime, respectively. This is Isoleucine N-monooxygenase 1 from Lotus japonicus (Lotus corniculatus var. japonicus).